The chain runs to 276 residues: Bifunctional protein FolD 1 (276 aa).

NADP(+)-binding positions include 161 to 163 (GRG), Ser-186, and Thr-227.

This sequence belongs to the tetrahydrofolate dehydrogenase/cyclohydrolase family. Homodimer.

It catalyses the reaction (6R)-5,10-methylene-5,6,7,8-tetrahydrofolate + NADP(+) = (6R)-5,10-methenyltetrahydrofolate + NADPH. The catalysed reaction is (6R)-5,10-methenyltetrahydrofolate + H2O = (6R)-10-formyltetrahydrofolate + H(+). It functions in the pathway one-carbon metabolism; tetrahydrofolate interconversion. In terms of biological role, catalyzes the oxidation of 5,10-methylenetetrahydrofolate to 5,10-methenyltetrahydrofolate and then the hydrolysis of 5,10-methenyltetrahydrofolate to 10-formyltetrahydrofolate. In Frankia casuarinae (strain DSM 45818 / CECT 9043 / HFP020203 / CcI3), this protein is Bifunctional protein FolD 1.